The chain runs to 227 residues: Leucyl/phenylalanyl-tRNA--protein transferase (227 aa).

This sequence belongs to the L/F-transferase family.

It is found in the cytoplasm. The enzyme catalyses N-terminal L-lysyl-[protein] + L-leucyl-tRNA(Leu) = N-terminal L-leucyl-L-lysyl-[protein] + tRNA(Leu) + H(+). It carries out the reaction N-terminal L-arginyl-[protein] + L-leucyl-tRNA(Leu) = N-terminal L-leucyl-L-arginyl-[protein] + tRNA(Leu) + H(+). It catalyses the reaction L-phenylalanyl-tRNA(Phe) + an N-terminal L-alpha-aminoacyl-[protein] = an N-terminal L-phenylalanyl-L-alpha-aminoacyl-[protein] + tRNA(Phe). Functions in the N-end rule pathway of protein degradation where it conjugates Leu, Phe and, less efficiently, Met from aminoacyl-tRNAs to the N-termini of proteins containing an N-terminal arginine or lysine. The sequence is that of Leucyl/phenylalanyl-tRNA--protein transferase from Desulfotalea psychrophila (strain LSv54 / DSM 12343).